A 1217-amino-acid polypeptide reads, in one-letter code: DNA-directed RNA polymerase subunit beta' (1217 aa).

4 residues coordinate Zn(2+): cysteine 60, cysteine 62, cysteine 75, and cysteine 78. Mg(2+)-binding residues include aspartate 449, aspartate 451, and aspartate 453. Zn(2+)-binding residues include cysteine 821, cysteine 895, cysteine 902, and cysteine 905.

The protein belongs to the RNA polymerase beta' chain family. In terms of assembly, the RNAP catalytic core consists of 2 alpha, 1 beta, 1 beta' and 1 omega subunit. When a sigma factor is associated with the core the holoenzyme is formed, which can initiate transcription. The cofactor is Mg(2+). Requires Zn(2+) as cofactor.

The catalysed reaction is RNA(n) + a ribonucleoside 5'-triphosphate = RNA(n+1) + diphosphate. In terms of biological role, DNA-dependent RNA polymerase catalyzes the transcription of DNA into RNA using the four ribonucleoside triphosphates as substrates. This Lactobacillus acidophilus (strain ATCC 700396 / NCK56 / N2 / NCFM) protein is DNA-directed RNA polymerase subunit beta'.